The chain runs to 403 residues: Argininosuccinate synthase (403 aa).

ATP-binding positions include 13-21 (AYSGGLDTS) and Ala40. L-citrulline-binding residues include Tyr92 and Ser97. Residue Gly122 coordinates ATP. 3 residues coordinate L-aspartate: Thr124, Asn128, and Asp129. Asn128 contacts L-citrulline. 5 residues coordinate L-citrulline: Arg132, Ser181, Ser190, Glu266, and Tyr278.

The protein belongs to the argininosuccinate synthase family. Type 1 subfamily. Homotetramer.

The protein resides in the cytoplasm. The enzyme catalyses L-citrulline + L-aspartate + ATP = 2-(N(omega)-L-arginino)succinate + AMP + diphosphate + H(+). It participates in amino-acid biosynthesis; L-arginine biosynthesis; L-arginine from L-ornithine and carbamoyl phosphate: step 2/3. This Aliivibrio fischeri (strain MJ11) (Vibrio fischeri) protein is Argininosuccinate synthase.